Here is a 301-residue protein sequence, read N- to C-terminus: Acetyl-coenzyme A carboxylase carboxyl transferase subunit beta (301 aa).

Residues 25–294 (LWIKCPETGE…SAANDVTRGA (270 aa)) enclose the CoA carboxyltransferase N-terminal domain.

This sequence belongs to the AccD/PCCB family. Acetyl-CoA carboxylase is a heterohexamer composed of biotin carboxyl carrier protein (AccB), biotin carboxylase (AccC) and two subunits each of ACCase subunit alpha (AccA) and ACCase subunit beta (AccD).

It is found in the cytoplasm. It catalyses the reaction N(6)-carboxybiotinyl-L-lysyl-[protein] + acetyl-CoA = N(6)-biotinyl-L-lysyl-[protein] + malonyl-CoA. Its pathway is lipid metabolism; malonyl-CoA biosynthesis; malonyl-CoA from acetyl-CoA: step 1/1. In terms of biological role, component of the acetyl coenzyme A carboxylase (ACC) complex. Biotin carboxylase (BC) catalyzes the carboxylation of biotin on its carrier protein (BCCP) and then the CO(2) group is transferred by the transcarboxylase to acetyl-CoA to form malonyl-CoA. The chain is Acetyl-coenzyme A carboxylase carboxyl transferase subunit beta from Rhizobium etli (strain ATCC 51251 / DSM 11541 / JCM 21823 / NBRC 15573 / CFN 42).